The sequence spans 659 residues: MSDVSQRIEALREQIEEANYQYYGLDQPTLSDAEYDALLQELIRLEKEHPEFLTPDSPSQRVGGYIAKEFPKVRHAEALLSLDNAFDAGDLLEFDRRVRSMVAEVEYVVELKIDGLTVALTYEDGALVRGATRGDGEVGEEITANLKTIPAIPLRLRKQADRLDVRGEGYMPKGSFLRLNQEREEAGQPLFANPRNAAAGSLRQLDSRITAQRKLGYFAYQVLTPEEGELASQTAVLDYLKEQGFSVNPEYRVFSAIEEVIAYCGEMVEKRHNYPYDIDGLVIKVNDIAQQRELGFTAKSPRWAIAYKFPAEQVETVVEDIVIRVGRTGVLTPTAYLTPVFVAGSTVGRATLHNLDNIRAKDVRIGDHVLIQKAGDVIPEVVKILPEKRTGGERIFEMPELCPECQSPVIREEGEAAHRCTSITCPARQREAIIHFVSRNAMNIDGLGPAVIYQLLEAGLIKDAADLYALEYDALVPLERLGKKSAENLLKAIEDSKERGLAPLIFGLGIRHVGEKAGKILAQKYGTMEDLEKAQVEELQEIPDVGPAMAQSVAQFFQQESTHHFLNKLRQAGVVMSAQHSAKPQIFAGKSIVVTGSLQRWDRHYVETMIEEFGGKAASSVSKKTAFVVAGEKAGSKLAKAKELGIPVLSEEEFAELLP.

Residues 32–36, 81–82, and E110 each bind NAD(+); these read DAEYD and SL. The active-site N6-AMP-lysine intermediate is K112. The NAD(+) site is built by R133, E168, K284, and K308. Residues C402, C405, C420, and C425 each contribute to the Zn(2+) site. One can recognise a BRCT domain in the interval 582 to 659; that stretch reads AKPQIFAGKS…SEEEFAELLP (78 aa).

This sequence belongs to the NAD-dependent DNA ligase family. LigA subfamily. The cofactor is Mg(2+). Mn(2+) serves as cofactor.

The catalysed reaction is NAD(+) + (deoxyribonucleotide)n-3'-hydroxyl + 5'-phospho-(deoxyribonucleotide)m = (deoxyribonucleotide)n+m + AMP + beta-nicotinamide D-nucleotide.. Its function is as follows. DNA ligase that catalyzes the formation of phosphodiester linkages between 5'-phosphoryl and 3'-hydroxyl groups in double-stranded DNA using NAD as a coenzyme and as the energy source for the reaction. It is essential for DNA replication and repair of damaged DNA. The chain is DNA ligase from Desulfitobacterium hafniense (strain DSM 10664 / DCB-2).